Here is a 251-residue protein sequence, read N- to C-terminus: Sugar fermentation stimulation protein homolog (251 aa).

It belongs to the SfsA family.

This Symbiobacterium thermophilum (strain DSM 24528 / JCM 14929 / IAM 14863 / T) protein is Sugar fermentation stimulation protein homolog.